A 1548-amino-acid polypeptide reads, in one-letter code: UDP-glucose:glycoprotein glucosyltransferase (1548 aa).

Positions 1 to 22 (MLRAVALCVSVVLIALYTPTSG) are cleaved as a signal peptide. Residue N181 is glycosylated (N-linked (GlcNAc...) asparagine). Residues 243-253 (TEYKSQDDAPK) are compositionally biased toward basic and acidic residues. Positions 243-265 (TEYKSQDDAPKPEAGSTSDEDLA) are disordered. N-linked (GlcNAc...) asparagine glycans are attached at residues N266 and N864. The segment at 1227–1548 (SANQAATDED…PSHEPKHGEL (322 aa)) is glucosyltransferase. Residues 1512 to 1523 (EDHENSHSRDSA) are compositionally biased toward basic and acidic residues. A disordered region spans residues 1512 to 1548 (EDHENSHSRDSAVDDSVDDSVEVTTVTPSHEPKHGEL). The Prevents secretion from ER signature appears at 1545–1548 (HGEL).

This sequence belongs to the glycosyltransferase 8 family. As to quaternary structure, monomer. May interact with CG7484/Sep15. Ca(2+) is required as a cofactor. The cofactor is Mn(2+).

Its subcellular location is the endoplasmic reticulum lumen. The protein localises to the endoplasmic reticulum-Golgi intermediate compartment. The enzyme catalyses N(4)-(alpha-D-Man-(1-&gt;2)-alpha-D-Man-(1-&gt;2)-alpha-D-Man-(1-&gt;3)-[alpha-D-Man-(1-&gt;2)-alpha-D-Man-(1-&gt;3)-[alpha-D-Man-(1-&gt;2)-alpha-D-Man-(1-&gt;6)]-alpha-D-Man-(1-&gt;6)]-beta-D-Man-(1-&gt;4)-beta-D-GlcNAc-(1-&gt;4)-beta-D-GlcNAc)-L-asparaginyl-[protein] (N-glucan mannose isomer 9A1,2,3B1,2,3) + UDP-alpha-D-glucose = N(4)-(alpha-D-Glc-(1-&gt;3)-alpha-D-Man-(1-&gt;2)-alpha-D-Man-(1-&gt;2)-alpha-D-Man-(1-&gt;3)-[alpha-D-Man-(1-&gt;2)-alpha-D-Man-(1-&gt;3)-[alpha-D-Man-(1-&gt;2)-alpha-D-Man-(1-&gt;6)]-alpha-D-Man-(1-&gt;6)]-beta-D-Man-(1-&gt;4)-beta-D-GlcNAc-(1-&gt;4)-beta-D-GlcNAc)-L-asparaginyl-[protein] + UDP + H(+). It functions in the pathway protein modification; protein glycosylation. Its function is as follows. Recognizes glycoproteins with minor folding defects. Reglucosylates single N-glycans near the misfolded part of the protein, thus providing quality control for protein folding in the endoplasmic reticulum. Reglucosylated proteins are recognized by calreticulin for recycling to the endoplasmic reticulum and refolding or degradation. The sequence is that of UDP-glucose:glycoprotein glucosyltransferase from Drosophila melanogaster (Fruit fly).